A 146-amino-acid polypeptide reads, in one-letter code: Alpha-amylase inhibitor BMAI-1 (146 aa).

A signal peptide spans 1–14; that stretch reads PTSVAVDQGSMVSN. Residue Asn125 is glycosylated (N-linked (GlcNAc...) asparagine).

This sequence belongs to the protease inhibitor I6 (cereal trypsin/alpha-amylase inhibitor) family. In terms of assembly, monomer. Post-translationally, five disulfide bonds, which are essential for the inhibitor activity, are probably present. Glycosylated. As to expression, endosperm.

The protein resides in the secreted. In terms of biological role, could be involved in insect defense mechanisms. Inhibits insect-type alpha-amylase. In Hordeum vulgare (Barley), this protein is Alpha-amylase inhibitor BMAI-1 (IAM1).